The following is a 150-amino-acid chain: Large ribosomal subunit protein bL9 (150 aa).

Belongs to the bacterial ribosomal protein bL9 family.

Binds to the 23S rRNA. In Corynebacterium jeikeium (strain K411), this protein is Large ribosomal subunit protein bL9.